A 153-amino-acid chain; its full sequence is Fimbrial protein EcpC (153 aa).

Positions 1-8 (MLKQVQKG) are cleaved as a propeptide — leader sequence. Position 9 is an N-methylphenylalanine (Phe9). Residues 9 to 29 (FTLIELMIVIAIIGILAAIAL) traverse the membrane as a helical segment. Residues Cys130 and Cys143 are joined by a disulfide bond.

The protein belongs to the N-Me-Phe pilin family.

It localises to the fimbrium. The protein resides in the membrane. The protein is Fimbrial protein EcpC (ecpC) of Eikenella corrodens.